Here is a 345-residue protein sequence, read N- to C-terminus: Skn-1 dependent zygotic transcript 15 protein (345 aa).

An F-box domain is found at 11 to 55; sequence AFGLHKLPHLVSDKVVKSMVPMELFTYSMVAEETKALVKRLFKKV.

Its function is as follows. May have a role in embryogenesis. This is Skn-1 dependent zygotic transcript 15 protein (sdz-15) from Caenorhabditis elegans.